We begin with the raw amino-acid sequence, 1186 residues long: Major DNA-binding protein (1186 aa).

Residues 495–508 fold into a zinc finger; sequence CCLCSLDNRHSCAH. Positions 839–840 match the Required for filament formation motif; it reads FW. The interval 1160-1186 is required for nuclear localization; it reads RRRPLACSDLFGDAPAEKRNDLTLDML.

This sequence belongs to the herpesviridae major DNA-binding protein family. As to quaternary structure, homooligomers. Forms double-helical filaments necessary for the formation of replication compartments within the host nucleus. Interacts with the origin-binding protein. Interacts with the helicase primase complex; this interaction stimulates primer synthesis activity of the helicase-primase complex. Interacts with the DNA polymerase. Interacts with the alkaline exonuclease; this interaction increases its nuclease processivity.

The protein localises to the host nucleus. In terms of biological role, plays several crucial roles in viral infection. Participates in the opening of the viral DNA origin to initiate replication by interacting with the origin-binding protein. May disrupt loops, hairpins and other secondary structures present on ssDNA to reduce and eliminate pausing of viral DNA polymerase at specific sites during elongation. Promotes viral DNA recombination by performing strand-transfer, characterized by the ability to transfer a DNA strand from a linear duplex to a complementary single-stranded DNA circle. Can also catalyze the renaturation of complementary single strands. Additionally, reorganizes the host cell nucleus, leading to the formation of prereplicative sites and replication compartments. This process is driven by the protein which can form double-helical filaments in the absence of DNA. In Bovine herpesvirus 2 (strain BMV) (BoHV-2), this protein is Major DNA-binding protein.